We begin with the raw amino-acid sequence, 99 residues long: Large ribosomal subunit protein eL30 (99 aa).

Belongs to the eukaryotic ribosomal protein eL30 family.

The polypeptide is Large ribosomal subunit protein eL30 (rpl30e) (Pyrococcus horikoshii (strain ATCC 700860 / DSM 12428 / JCM 9974 / NBRC 100139 / OT-3)).